The chain runs to 235 residues: Small ribosomal subunit protein uS2 (235 aa).

It belongs to the universal ribosomal protein uS2 family.

This is Small ribosomal subunit protein uS2 from Caldanaerobacter subterraneus subsp. tengcongensis (strain DSM 15242 / JCM 11007 / NBRC 100824 / MB4) (Thermoanaerobacter tengcongensis).